We begin with the raw amino-acid sequence, 459 residues long: Mitochondrial distribution and morphology protein 34 (459 aa).

Residues 1–190 (MSFRFNEAVF…LPSLIFNTSQ (190 aa)) form the SMP-LTD domain. Basic and acidic residues predominate over residues 338 to 347 (RSNSNDDNAK). Residues 338 to 375 (RSNSNDDNAKPRRRKIKCKKTRTPSNLQSQGEQAVDDS) are disordered. The segment covering 348 to 359 (PRRRKIKCKKTR) has biased composition (basic residues).

It belongs to the MDM34 family. Component of the ER-mitochondria encounter structure (ERMES) or MDM complex, composed of MMM1, MDM10, MDM12 and MDM34. In terms of processing, ubiquitinated by a SCF (SKP1-CUL1-F-box protein) E3 ubiquitin-protein ligase complex containing the F-box protein MDM30. Ubiquitination is important for mitochondrial integrity.

It localises to the mitochondrion outer membrane. In terms of biological role, component of the ERMES/MDM complex, which serves as a molecular tether to connect the endoplasmic reticulum (ER) and mitochondria. Components of this complex are involved in the control of mitochondrial shape and protein biogenesis, and function in nonvesicular lipid trafficking between the ER and mitochondria. MDM34 is required for the interaction of the ER-resident membrane protein MMM1 and the outer mitochondrial membrane-resident beta-barrel protein MDM10. This Saccharomyces cerevisiae (strain YJM789) (Baker's yeast) protein is Mitochondrial distribution and morphology protein 34.